The primary structure comprises 523 residues: Signal peptide peptidase-like 3 (523 aa).

An N-terminal signal peptide occupies residues 1–35; that stretch reads MAFPAPSSSSPRRRGRGLAYLLVSVLLLASRVPGA. At 36–207 the chain is on the lumenal side; it reads AGADSEFEDG…EKPSFDGAIP (172 aa). In terms of domain architecture, PA spans 110 to 182; sequence SAPLASSIAV…SQSAGRKILS (73 aa). N-linked (GlcNAc...) asparagine glycosylation occurs at N159. Residues 208–228 form a helical membrane-spanning segment; sequence FLWLMAVGSVACASVWSFVVV. Over 229–254 the chain is Cytoplasmic; sequence GDEDKNAPTLGGEEAADSEIVELQTK. The helical transmembrane segment at 255-272 threads the bilayer; sequence TALVFIVTASLVLLFLFF. The Lumenal segment spans residues 273-275; it reads FKS. The helical transmembrane segment at 276 to 298 threads the bilayer; it reads TWSAWLLVVLFCLSGLQGLHYVA. Topologically, residues 299–321 are cytoplasmic; the sequence is STLIVRTCDRCREAKVALPVLGN. Residues 322 to 342 traverse the membrane as a helical segment; that stretch reads VTVVTLVILPLALIFVVVWAV. The Lumenal segment spans residues 343–347; it reads HQNSP. The helical transmembrane segment at 348–368 threads the bilayer; it reads FAWVGQDLMGICMMILVLQVV. The Cytoplasmic segment spans residues 369 to 377; sequence HLPNIKVAT. A helical membrane pass occupies residues 378 to 398; it reads ALLVSAFMYDIFWVFISPFIF. D387 is a catalytic residue. The Lumenal segment spans residues 399–430; that stretch reads KKSVMITVARGSDEGPSLPMVLKMPKEFDTWN. A helical transmembrane segment spans residues 431 to 451; that stretch reads GYDMIGFGDILFPGLLVAFSF. Residue D439 is part of the active site. At 452 to 465 the chain is on the cytoplasmic side; the sequence is RYDRANGKDLTDGY. Residues 466 to 486 traverse the membrane as a helical segment; it reads FLCLMIGYAFGLSCTYVGLYL. The Lumenal portion of the chain corresponds to 487-489; the sequence is MKS. The helical transmembrane segment at 490–510 threads the bilayer; the sequence is GQPALLYLVPSTLGTIVTLGA. Residues 492–494 carry the PAL motif; that stretch reads PAL. The Cytoplasmic portion of the chain corresponds to 511-523; sequence KRGELSQLWNAKV.

The protein belongs to the peptidase A22B family. Glycosylated.

The protein localises to the endosome membrane. Intramembrane-cleaving aspartic protease (I-CLiP) that cleaves type II membrane signal peptides in the hydrophobic plane of the membrane. The protein is Signal peptide peptidase-like 3 (SPPL3) of Oryza sativa subsp. japonica (Rice).